Reading from the N-terminus, the 91-residue chain is Small ribosomal subunit protein uS15c (91 aa).

The protein belongs to the universal ribosomal protein uS15 family. As to quaternary structure, part of the 30S ribosomal subunit.

The protein localises to the plastid. It is found in the chloroplast. The chain is Small ribosomal subunit protein uS15c (rps15) from Phalaenopsis aphrodite subsp. formosana (Moth orchid).